A 391-amino-acid chain; its full sequence is Digeranylgeranylglycerophospholipid reductase (391 aa).

Residues glycine 13, glutamate 32, cysteine 43, alanine 44, glycine 46, arginine 97, alanine 121, aspartate 277, glycine 289, and isoleucine 290 each contribute to the FAD site.

The protein belongs to the geranylgeranyl reductase family. DGGGPL reductase subfamily. It depends on FAD as a cofactor.

It catalyses the reaction a 2,3-bis-O-phytanyl-sn-glycerol 1-phospholipid + 8 oxidized 2[4Fe-4S]-[ferredoxin] = a 2,3-bis-O-(geranylgeranyl)-sn-glycerol 1-phospholipid + 8 reduced 2[4Fe-4S]-[ferredoxin] + 16 H(+). It carries out the reaction 2,3-bis-O-(phytanyl)-sn-glycerol 1-phosphate + 8 oxidized 2[4Fe-4S]-[ferredoxin] = 2,3-bis-O-(geranylgeranyl)-sn-glycerol 1-phosphate + 8 reduced 2[4Fe-4S]-[ferredoxin] + 16 H(+). The enzyme catalyses a 2,3-bis-O-phytanyl-sn-glycerol 1-phospholipid + 8 A = a 2,3-bis-O-(geranylgeranyl)-sn-glycerol 1-phospholipid + 8 AH2. The catalysed reaction is CDP-2,3-bis-O-(geranylgeranyl)-sn-glycerol + 8 AH2 = CDP-2,3-bis-O-(phytanyl)-sn-glycerol + 8 A. It catalyses the reaction archaetidylserine + 8 AH2 = 2,3-bis-O-phytanyl-sn-glycero-3-phospho-L-serine + 8 A. It functions in the pathway membrane lipid metabolism; glycerophospholipid metabolism. Functionally, is involved in the reduction of 2,3-digeranylgeranylglycerophospholipids (unsaturated archaeols) into 2,3-diphytanylglycerophospholipids (saturated archaeols) in the biosynthesis of archaeal membrane lipids. Catalyzes the formation of archaetidic acid (2,3-di-O-phytanyl-sn-glyceryl phosphate) from 2,3-di-O-geranylgeranylglyceryl phosphate (DGGGP) via the hydrogenation of each double bond of the isoprenoid chains. Is also probably able to reduce double bonds of geranyl groups in CDP-2,3-bis-O-(geranylgeranyl)-sn-glycerol and archaetidylserine, thus acting at various stages in the biosynthesis of archaeal membrane lipids. The chain is Digeranylgeranylglycerophospholipid reductase from Methanothrix thermoacetophila (strain DSM 6194 / JCM 14653 / NBRC 101360 / PT) (Methanosaeta thermophila).